The following is a 158-amino-acid chain: SsrA-binding protein (158 aa).

A disordered region spans residues 130-158; the sequence is KGKKNHDKREAQAKRDWSRQKQRLLKDHG. Residues 136-158 show a composition bias toward basic and acidic residues; the sequence is DKREAQAKRDWSRQKQRLLKDHG.

The protein belongs to the SmpB family.

The protein resides in the cytoplasm. In terms of biological role, required for rescue of stalled ribosomes mediated by trans-translation. Binds to transfer-messenger RNA (tmRNA), required for stable association of tmRNA with ribosomes. tmRNA and SmpB together mimic tRNA shape, replacing the anticodon stem-loop with SmpB. tmRNA is encoded by the ssrA gene; the 2 termini fold to resemble tRNA(Ala) and it encodes a 'tag peptide', a short internal open reading frame. During trans-translation Ala-aminoacylated tmRNA acts like a tRNA, entering the A-site of stalled ribosomes, displacing the stalled mRNA. The ribosome then switches to translate the ORF on the tmRNA; the nascent peptide is terminated with the 'tag peptide' encoded by the tmRNA and targeted for degradation. The ribosome is freed to recommence translation, which seems to be the essential function of trans-translation. The polypeptide is SsrA-binding protein (Ruegeria sp. (strain TM1040) (Silicibacter sp.)).